Reading from the N-terminus, the 858-residue chain is Leucine--tRNA ligase (858 aa).

Positions Pro-53–His-63 match the 'HIGH' region motif. Positions Lys-622–Ser-626 match the 'KMSKS' region motif. Lys-625 serves as a coordination point for ATP.

It belongs to the class-I aminoacyl-tRNA synthetase family.

The protein resides in the cytoplasm. The enzyme catalyses tRNA(Leu) + L-leucine + ATP = L-leucyl-tRNA(Leu) + AMP + diphosphate. The chain is Leucine--tRNA ligase from Prochlorococcus marinus subsp. pastoris (strain CCMP1986 / NIES-2087 / MED4).